The sequence spans 294 residues: N-acetylmuramic acid 6-phosphate etherase (294 aa).

Positions 54-217 (VISSFQNGGR…STASMIGIGK (164 aa)) constitute an SIS domain. Glu82 (proton donor) is an active-site residue. The active site involves Glu113.

This sequence belongs to the GCKR-like family. MurNAc-6-P etherase subfamily. Homodimer.

The catalysed reaction is N-acetyl-D-muramate 6-phosphate + H2O = N-acetyl-D-glucosamine 6-phosphate + (R)-lactate. It functions in the pathway amino-sugar metabolism; N-acetylmuramate degradation. In terms of biological role, specifically catalyzes the cleavage of the D-lactyl ether substituent of MurNAc 6-phosphate, producing GlcNAc 6-phosphate and D-lactate. The protein is N-acetylmuramic acid 6-phosphate etherase of Bacillus cytotoxicus (strain DSM 22905 / CIP 110041 / 391-98 / NVH 391-98).